A 709-amino-acid chain; its full sequence is Polyribonucleotide nucleotidyltransferase (709 aa).

Residues Asp486 and Asp492 each contribute to the Mg(2+) site. Residues 553-612 (PRIHTIKINPDKIKDVIGKGGSVIRALTEETGTTIEIEDDGTVKIAATDGEKAKHAISRI) form the KH domain. Residues 622-690 (ARIYTGKVTR…RQGRVRLSIK (69 aa)) form the S1 motif domain.

Belongs to the polyribonucleotide nucleotidyltransferase family. In terms of assembly, component of the RNA degradosome, which is a multiprotein complex involved in RNA processing and mRNA degradation. It depends on Mg(2+) as a cofactor.

It localises to the cytoplasm. The catalysed reaction is RNA(n+1) + phosphate = RNA(n) + a ribonucleoside 5'-diphosphate. Its function is as follows. Involved in mRNA degradation. Catalyzes the phosphorolysis of single-stranded polyribonucleotides processively in the 3'- to 5'-direction. This chain is Polyribonucleotide nucleotidyltransferase, found in Photorhabdus laumondii subsp. laumondii (strain DSM 15139 / CIP 105565 / TT01) (Photorhabdus luminescens subsp. laumondii).